The sequence spans 858 residues: MSTTRPLLGMKRITEVTCTEPPGGRQSPTASRAQPDSLTVDEFTVHEDKQTELKCSKPKVEQVFQVTFTIIGLLDHTGAHGSKASRQIWLQLKGKKEDVYKAKEYVKGLCDPELQKEEWYPVDMHCIFAGARGLFLDRLLRDTSAEVQVLEPGRLKLSGCAEAVVMAQSRVQQFVALFQEKRSLPADREPSVKRKFKTFVEDRADKYAMELLLLPSALKEELLGLAQSPTQPIVIIDLEQDRSQTSTPVTDLSNRILDTTFEDKTSPITPEVMPGLNGRPCNKRRSSESEQRDTKRQYSLERREEEQCEEREREPTKTWTVKSAKGTLAASEMTNESEAVSPETNLRCLVNFFRTMGYQQDVVERVVRETGQTEDTFLLLERIVEETQKTQSTQGAQRTSRTPDPSPCANASSTSTSNRLKEKERVQMRALAEIKCKENIRPPSTNGIGQKNQTSSVPLASATLKRNNGAQTDLCEVIIIDDEEDFTETERKPRLTPLDLKPESRFDYLPRGSSQTMVPVRMETVTNLRSSSQGPPLRTSDTRPGCSYQTLPGRAPLPRSEAQYTSKAAPLTGMSRFQQSLRTPYRLILQNEPGSPNLRHIIIDGSNVAMAHGLHRVFSCRGIAIAVEAFWRRGHREITVFVPQWRQKKDPNITEQHFLNQLENLRLLSFTPSREVCGHRISSHDDRFLLHLAEKTGGVIVTNDNLRDFVSQSEAWRRIIHERLLQFTFVEDHFMIPDDPLGKHGPHLDEFLLKDSRGSPIIPPLRTDLRATPSVYSQAAQSTAHPSSPSHWPHSGPPDWHLPRPSPSPPPQRSPSETTELKRKLYDIFPDQKQRIDRILSDNPYMRDLNALSGLLLG.

The interval 17–37 is disordered; the sequence is TCTEPPGGRQSPTASRAQPDS. Over residues 26–37 the composition is skewed to polar residues; it reads QSPTASRAQPDS. In terms of domain architecture, KH-like spans 96–180; that stretch reads KEDVYKAKEY…VQQFVALFQE (85 aa). Disordered regions lie at residues 262–321 and 388–424; these read EDKT…TWTV and QKTQSTQGAQRTSRTPDPSPCANASSTSTSNRLKEKE. The segment covering 285 to 316 has biased composition (basic and acidic residues); that stretch reads RSSESEQRDTKRQYSLERREEEQCEEREREPT. Residues 389–418 show a composition bias toward polar residues; it reads KTQSTQGAQRTSRTPDPSPCANASSTSTSN. The region spanning 598–750 is the RNase NYN domain; it reads LRHIIIDGSN…LGKHGPHLDE (153 aa). The span at 774 to 784 shows a compositional bias: polar residues; that stretch reads SVYSQAAQSTA. Residues 774 to 823 are disordered; the sequence is SVYSQAAQSTAHPSSPSHWPHSGPPDWHLPRPSPSPPPQRSPSETTELKR. Over residues 785–799 the composition is skewed to low complexity; that stretch reads HPSSPSHWPHSGPPD. Over residues 804–813 the composition is skewed to pro residues; sequence RPSPSPPPQR. Residues 813-858 form a coCUN region; that stretch reads RSPSETTELKRKLYDIFPDQKQRIDRILSDNPYMRDLNALSGLLLG.

This sequence belongs to the N4BP1 family.

It is found in the nucleus. Its subcellular location is the nucleolus. It localises to the PML body. Potent suppressor of cytokine production that acts as a regulator of innate immune signaling and inflammation. Acts as a key negative regulator of select cytokine and chemokine responses elicited by TRIF-independent Toll-like receptors (TLRs), thereby limiting inflammatory cytokine responses to minor insults. Has ribonuclease activity. This Danio rerio (Zebrafish) protein is NEDD4-binding protein 1.